Reading from the N-terminus, the 67-residue chain is Large ribosomal subunit protein uL29 (67 aa).

It belongs to the universal ribosomal protein uL29 family.

The sequence is that of Large ribosomal subunit protein uL29 from Moorella thermoacetica (strain ATCC 39073 / JCM 9320).